A 229-amino-acid polypeptide reads, in one-letter code: Uracil-DNA glycosylase (229 aa).

The Proton acceptor role is filled by Asp65.

The protein belongs to the uracil-DNA glycosylase (UDG) superfamily. UNG family.

It is found in the cytoplasm. It carries out the reaction Hydrolyzes single-stranded DNA or mismatched double-stranded DNA and polynucleotides, releasing free uracil.. Excises uracil residues from the DNA which can arise as a result of misincorporation of dUMP residues by DNA polymerase or due to deamination of cytosine. The sequence is that of Uracil-DNA glycosylase from Limosilactobacillus reuteri (strain DSM 20016) (Lactobacillus reuteri).